A 482-amino-acid polypeptide reads, in one-letter code: BTB/POZ domain and ankyrin repeat-containing protein NOOT1 (482 aa).

In terms of domain architecture, BTB spans 25 to 107; sequence SDVVFSVEGR…LYSGQVSIVP (83 aa). The segment at 113–127 adopts a C2HC NPR-type zinc-finger fold; sequence RPNCGDRGCWHTHCT. C116, C121, H123, and C126 together coordinate Zn(2+). ANK repeat units follow at residues 249-278, 279-308, 313-342, and 346-380; these read QKIRRMRRALDSSDVELVKLMVMGEGLNLD, EALALPYAVENCSREVVKALLELGAADVNF, TGKTPLHIAAEMVSPDMVAVLLDHHADPNV, and DGVTPLDILRTLTSDFLFKGAVPGLTHIEPNKLRL. Residues 395–434 are disordered; that stretch reads EEGNNNNSNNNNNATASSATNMYPHHNMNEDHHHSHNNNN. A compositionally biased stretch (low complexity) spans 398–415; that stretch reads NNNNSNNNNNATASSATN.

Belongs to the plant 'ANKYRIN-BTB/POZ' family. 'NOOT-BOP-COCH-like' (NBCL) subfamily. Homodimer. As to expression, expressed in the shoot apical meristem (SAM) at the base of the developing leaf where stipules are formed. Associated with functional and vestigial abscission zones (AZs), including pulvini.

Its subcellular location is the nucleus. It is found in the cytoplasm. The protein resides in the cell membrane. Its pathway is protein modification; protein ubiquitination. In terms of biological role, may act as a substrate-specific adapter of an E3 ubiquitin-protein ligase complex (CUL3-RBX1-BTB) which mediates the ubiquitination and subsequent proteasomal degradation of target proteins. Transcriptional co-regulator involved in the promotion of leaf and floral meristem fate and determinacy. Promotes normal stipule growth and development. Required for the abscission of senescent organs, probably by regulating the cell wall disorganization in abscission zones (AZs, e.g. pulvini at the base of leaves). Involved in the coordination of the symbiotic nodule developmental program. Promotes the formation of root nodules by interacting directly with APP1 to modulate the expression of the nuclear transcription factor Y subunit (NF-YA1), a key nodulin. Necessary for the robust maintenance of nodule identity throughout the nodule developmental program. Involved in the regulation of indeterminate nodule identity in association with NOOT2. In Medicago truncatula (Barrel medic), this protein is BTB/POZ domain and ankyrin repeat-containing protein NOOT1.